Reading from the N-terminus, the 111-residue chain is Cell cycle protein GpsB (111 aa).

Residues 38-72 are a coiled coil; sequence IKDYEAFHKEFDQLKQQNARLKRELEEQKVAATQV.

Belongs to the GpsB family. Forms polymers through the coiled coil domains. Interacts with PBP1, MreC and EzrA.

It localises to the cytoplasm. In terms of biological role, divisome component that associates with the complex late in its assembly, after the Z-ring is formed, and is dependent on DivIC and PBP2B for its recruitment to the divisome. Together with EzrA, is a key component of the system that regulates PBP1 localization during cell cycle progression. Its main role could be the removal of PBP1 from the cell pole after pole maturation is completed. Also contributes to the recruitment of PBP1 to the division complex. Not essential for septum formation. This Bacillus mycoides (strain KBAB4) (Bacillus weihenstephanensis) protein is Cell cycle protein GpsB.